The primary structure comprises 807 residues: Glycerol-3-phosphate acyltransferase (807 aa).

Residues 308-313 (CHRSHM) carry the HXXXXD motif motif.

Belongs to the GPAT/DAPAT family.

Its subcellular location is the cell inner membrane. The catalysed reaction is sn-glycerol 3-phosphate + an acyl-CoA = a 1-acyl-sn-glycero-3-phosphate + CoA. The protein operates within phospholipid metabolism; CDP-diacylglycerol biosynthesis; CDP-diacylglycerol from sn-glycerol 3-phosphate: step 1/3. The sequence is that of Glycerol-3-phosphate acyltransferase from Shewanella putrefaciens (strain CN-32 / ATCC BAA-453).